We begin with the raw amino-acid sequence, 337 residues long: D-alanine--D-alanine ligase (337 aa).

In terms of domain architecture, ATP-grasp spans 124–330 (KMWFSALGIP…FTEYLSLVIN (207 aa)). Residue 154–209 (ALAQWGSIFVKAASQGSSVGCYKVDDSAKVAGVLKDAFGYAPYVIVEKTIKARELE) coordinates ATP. 3 residues coordinate Mg(2+): aspartate 284, glutamate 297, and asparagine 299.

Belongs to the D-alanine--D-alanine ligase family. Mg(2+) serves as cofactor. The cofactor is Mn(2+).

The protein localises to the cytoplasm. The catalysed reaction is 2 D-alanine + ATP = D-alanyl-D-alanine + ADP + phosphate + H(+). Its pathway is cell wall biogenesis; peptidoglycan biosynthesis. In terms of biological role, cell wall formation. This chain is D-alanine--D-alanine ligase, found in Shewanella baltica (strain OS185).